Here is a 123-residue protein sequence, read N- to C-terminus: Protein LLP homolog (123 aa).

The segment covering 1–21 has biased composition (basic residues); that stretch reads MAKSLRSKWKRKMRAEKRKKN. Disordered stretches follow at residues 1 to 22 and 61 to 123; these read MAKSLRSKWKRKMRAEKRKKNA and DLDV…KLAW. Over residues 70-89 the composition is skewed to basic and acidic residues; that stretch reads ESSKMDTELKRNKKNLRDQH. Residues 100 to 123 are compositionally biased toward basic residues; the sequence is QQKKLKSQCGKKKGKSKQAKKLAW.

Belongs to the learning-associated protein family.

It localises to the nucleus. The protein resides in the nucleolus. It is found in the chromosome. Functionally, regulates dendritic and spine growth and synaptic transmission. This chain is Protein LLP homolog (llph), found in Xenopus laevis (African clawed frog).